The sequence spans 138 residues: Flavodoxin (138 aa).

The region spanning 1-136 (MKIVYWSGTG…DCIEFGKKIA (136 aa)) is the Flavodoxin-like domain.

Belongs to the flavodoxin family. It depends on FMN as a cofactor.

Functionally, low-potential electron donor to a number of redox enzymes. The chain is Flavodoxin from Clostridium beijerinckii (Clostridium MP).